The primary structure comprises 1113 residues: Histone deacetylase 5 (1113 aa).

Residues Met1–Arg22 form a disordered region. Residue Lys35 forms a Glycyl lysine isopeptide (Lys-Gly) (interchain with G-Cter in SUMO2) linkage. Disordered stretches follow at residues Pro39–Leu63 and Lys187–Leu272. Residues Asp238–Ala249 are compositionally biased toward basic and acidic residues. Residue Ser250 is modified to Phosphoserine; by AMPK, CaMK1, SIK1 and PKD/PRKD1. The span at Lys263–Leu272 shows a compositional bias: basic and acidic residues. At Thr283 the chain carries Phosphothreonine; by PKC. Positions Arg472–Ser494 are disordered. A compositionally biased stretch (low complexity) spans Ser484–Ser494. Ser488 carries the post-translational modification Phosphoserine; by AMPK, CaMK1, SIK1 and PKD/PRKD1. Position 523 is an N6-acetyllysine (Lys523). The tract at residues Thr526–Ser611 is disordered. Residues Ser571 to Glu610 show a composition bias toward acidic residues. Ser600 and Ser650 each carry phosphoserine. Residues Gly675–Gln1019 form a histone deacetylase region. Zn(2+)-binding residues include Cys687, Cys689, His695, and Cys772. His824 is an active-site residue. Positions Glu1072 to Leu1113 match the Nuclear export signal motif. The tract at residues Glu1088–Leu1113 is disordered. Ser1099 carries the post-translational modification Phosphoserine.

This sequence belongs to the histone deacetylase family. HD type 2 subfamily. As to quaternary structure, interacts with AHRR, BAHD1, BCOR, HDAC7, HDAC9, CTBP1, MEF2C, NCOR2, NRIP1, PHB2 and a 14-3-3 chaperone protein. Interacts with BCL6, DDIT3/CHOP, GRK5, KDM5B and MYOCD. Interacts with EP300 in the presence of TFAP2C. Interacts with ANKRA2. Interacts with CUL7 (as part of the 3M complex); negatively regulated by ANKRA2. Interacts with ZBTB7B; the interaction allows the recruitment of HDAC4 on CD8 loci for deacetylation and possible inhibition of CD8 genes expression. Interacts with RARA. In terms of processing, phosphorylated by AMPK, CaMK1, SIK1 and PRKD1 at Ser-250 and Ser-488. The phosphorylation is required for the export to the cytoplasm and inhibition. Phosphorylated by the PKC kinases PKN1 and PKN2, impairing nuclear import. Phosphorylated by GRK5, leading to nuclear export of HDAC5 and allowing MEF2-mediated transcription. Post-translationally, ubiquitinated. Polyubiquitination however does not lead to its degradation.

It is found in the nucleus. It localises to the cytoplasm. It carries out the reaction N(6)-acetyl-L-lysyl-[histone] + H2O = L-lysyl-[histone] + acetate. In terms of biological role, responsible for the deacetylation of lysine residues on the N-terminal part of the core histones (H2A, H2B, H3 and H4). Histone deacetylation gives a tag for epigenetic repression and plays an important role in transcriptional regulation, cell cycle progression and developmental events. Histone deacetylases act via the formation of large multiprotein complexes. Involved in muscle maturation by repressing transcription of myocyte enhancer MEF2C. During muscle differentiation, it shuttles into the cytoplasm, allowing the expression of myocyte enhancer factors. Serves as a corepressor of RARA and causes its deacetylation. In association with RARA, plays a role in the repression of microRNA-10a and thereby in the inflammatory response. The chain is Histone deacetylase 5 (Hdac5) from Mus musculus (Mouse).